A 359-amino-acid chain; its full sequence is Peptide chain release factor 1 (359 aa).

An N5-methylglutamine modification is found at Gln238.

It belongs to the prokaryotic/mitochondrial release factor family. Methylated by PrmC. Methylation increases the termination efficiency of RF1.

Its subcellular location is the cytoplasm. Functionally, peptide chain release factor 1 directs the termination of translation in response to the peptide chain termination codons UAG and UAA. This chain is Peptide chain release factor 1, found in Rhodococcus jostii (strain RHA1).